Here is a 139-residue protein sequence, read N- to C-terminus: Toxin FitB (139 aa).

In terms of domain architecture, PINc spans 2 to 123 (ILLDTNVISE…HSLTVATRDT (122 aa)). Mg(2+) is bound by residues Asp-5 and Asp-104.

This sequence belongs to the PINc/VapC protein family. As to quaternary structure, forms a heterodimer with FitA, 4 FitAB heterodimers form a complex that binds to promoter DNA. The complex is also seen in solution. This protein does not actually contact DNA. Requires Mg(2+) as cofactor.

Toxic component of a type II toxin-antitoxin (TA) system. Plays a role in the speed with which bacteria traverse human epithelial cells; disruption of the locus increases the speed of trafficking about 2-4-fold. FitAB binds to its own promoter better than FitA alone. The expected nuclease activity was not observed for the FitAB complex, perhaps because FitA (the antitoxin) prevents metal binding and thus catalysis by FitB. The sequence is that of Toxin FitB (fitB) from Neisseria gonorrhoeae (strain ATCC 700825 / FA 1090).